We begin with the raw amino-acid sequence, 183 residues long: Potassium-transporting ATPase KdpC subunit (183 aa).

The chain crosses the membrane as a helical span at residues 10-30 (LTVFTLILFAVIYPLAIYGIA).

Belongs to the KdpC family. In terms of assembly, the system is composed of three essential subunits: KdpA, KdpB and KdpC.

The protein resides in the cell inner membrane. Its function is as follows. Part of the high-affinity ATP-driven potassium transport (or Kdp) system, which catalyzes the hydrolysis of ATP coupled with the electrogenic transport of potassium into the cytoplasm. This subunit acts as a catalytic chaperone that increases the ATP-binding affinity of the ATP-hydrolyzing subunit KdpB by the formation of a transient KdpB/KdpC/ATP ternary complex. This is Potassium-transporting ATPase KdpC subunit from Flavobacterium johnsoniae (strain ATCC 17061 / DSM 2064 / JCM 8514 / BCRC 14874 / CCUG 350202 / NBRC 14942 / NCIMB 11054 / UW101) (Cytophaga johnsonae).